The primary structure comprises 107 residues: Metallothionein-1 (107 aa).

Belongs to the metallothionein superfamily. Type 7 family.

Functionally, the metallothioneins are involved in the cellular sequestration of toxic metal ions. Binds 12 cadmium ions per molecule. This is Metallothionein-1 from Tetrahymena thermophila.